The sequence spans 331 residues: Hydroxyacylglutathione hydrolase 1, mitochondrial (331 aa).

A mitochondrion-targeting transit peptide spans 1–76; it reads MPVISKASST…HFCSISNMPS (76 aa). The Zn(2+) site is built by His-131 and His-133. The Fe cation site is built by Asp-135 and His-136. Zn(2+)-binding residues include His-189 and Asp-208. Asp-208 contributes to the Fe cation binding site. A substrate-binding site is contributed by 246–248; sequence REN.

The protein belongs to the metallo-beta-lactamase superfamily. Glyoxalase II family. The cofactor is Fe(2+). It depends on Fe(3+) as a cofactor. Zn(2+) is required as a cofactor. Mainly expressed in roots, flowers and flower buds. Also detected in leaves.

Its subcellular location is the mitochondrion. The enzyme catalyses an S-(2-hydroxyacyl)glutathione + H2O = a 2-hydroxy carboxylate + glutathione + H(+). It participates in secondary metabolite metabolism; methylglyoxal degradation; (R)-lactate from methylglyoxal: step 2/2. Its function is as follows. Thiolesterase that catalyzes the hydrolysis of S-D-lactoyl-glutathione to form glutathione and D-lactic acid. The protein is Hydroxyacylglutathione hydrolase 1, mitochondrial (GLX2-1) of Arabidopsis thaliana (Mouse-ear cress).